A 329-amino-acid polypeptide reads, in one-letter code: Glutamyl-tRNA reductase (329 aa).

Substrate is bound by residues 51-54, S99, 104-106, and Q110; these read TCLR and EDQ. The Nucleophile role is filled by C52. 179–184 serves as a coordination point for NADP(+); it reads GIGELA.

It belongs to the glutamyl-tRNA reductase family. Homodimer.

The catalysed reaction is (S)-4-amino-5-oxopentanoate + tRNA(Glu) + NADP(+) = L-glutamyl-tRNA(Glu) + NADPH + H(+). It functions in the pathway porphyrin-containing compound metabolism; protoporphyrin-IX biosynthesis; 5-aminolevulinate from L-glutamyl-tRNA(Glu): step 1/2. Catalyzes the NADPH-dependent reduction of glutamyl-tRNA(Glu) to glutamate 1-semialdehyde (GSA). The protein is Glutamyl-tRNA reductase of Fusobacterium nucleatum subsp. nucleatum (strain ATCC 25586 / DSM 15643 / BCRC 10681 / CIP 101130 / JCM 8532 / KCTC 2640 / LMG 13131 / VPI 4355).